The chain runs to 618 residues: Chaperone protein HtpG (618 aa).

The tract at residues 1-331 (MAKHTFQTEV…SEDLPLNVSR (331 aa)) is a; substrate-binding. The segment at 332–541 (EILQQNRILA…EDDPNFAMIK (210 aa)) is b. The segment at 542–618 (MMRQMGNALG…RLNAMLERAI (77 aa)) is c.

The protein belongs to the heat shock protein 90 family. Homodimer.

It localises to the cytoplasm. In terms of biological role, molecular chaperone. Has ATPase activity. This Wolinella succinogenes (strain ATCC 29543 / DSM 1740 / CCUG 13145 / JCM 31913 / LMG 7466 / NCTC 11488 / FDC 602W) (Vibrio succinogenes) protein is Chaperone protein HtpG.